The primary structure comprises 158 residues: Transcription elongation factor GreA (158 aa).

A coiled-coil region spans residues 47–74; sequence NSEYDEAKNEQAFTEGRIIQLENMLKNA.

It belongs to the GreA/GreB family.

Necessary for efficient RNA polymerase transcription elongation past template-encoded arresting sites. The arresting sites in DNA have the property of trapping a certain fraction of elongating RNA polymerases that pass through, resulting in locked ternary complexes. Cleavage of the nascent transcript by cleavage factors such as GreA or GreB allows the resumption of elongation from the new 3'terminus. GreA releases sequences of 2 to 3 nucleotides. This Clostridium perfringens (strain ATCC 13124 / DSM 756 / JCM 1290 / NCIMB 6125 / NCTC 8237 / Type A) protein is Transcription elongation factor GreA.